The sequence spans 672 residues: uncharacterized protein (672 aa).

Residues 1–24 form the signal peptide; that stretch reads MKTLKVLKIFIIVYISSVSLESFA. 2 helical membrane-spanning segments follow: residues 226-246 and 254-274; these read IIGA…ALNK and ITLF…LGPL. The segment covering 363-372 has biased composition (polar residues); it reads SNGTSGNNKP. Positions 363 to 384 are disordered; it reads SNGTSGNNKPIPNFDPDGKKDR. Transmembrane regions (helical) follow at residues 410-430, 436-456, 469-489, and 562-582; these read IILV…LYFI, CMVT…MVLF, VCIS…LLIT, and VVSI…FYYF. A compositionally biased stretch (basic and acidic residues) spans 628–646; that stretch reads HGKSSLGDKPDIGNKRKDG. The disordered stretch occupies residues 628–672; it reads HGKSSLGDKPDIGNKRKDGAQQGEDAVNSSGGEVADLASGSGGGK.

This sequence belongs to the TrbL/VirB6 family.

The protein resides in the cell membrane. This is an uncharacterized protein from Rickettsia prowazekii (strain Madrid E).